The sequence spans 337 residues: Anthranilate phosphoribosyltransferase (337 aa).

Residues Gly-81, 84 to 85 (GD), Ser-89, 91 to 94 (NVST), 109 to 117 (KHGNRALSS), and Ala-121 each bind 5-phospho-alpha-D-ribose 1-diphosphate. Gly-81 serves as a coordination point for anthranilate. Mg(2+) is bound at residue Ser-93. Asn-112 serves as a coordination point for anthranilate. Arg-167 provides a ligand contact to anthranilate. Mg(2+) contacts are provided by Asp-226 and Glu-227.

Belongs to the anthranilate phosphoribosyltransferase family. As to quaternary structure, homodimer. The cofactor is Mg(2+).

The catalysed reaction is N-(5-phospho-beta-D-ribosyl)anthranilate + diphosphate = 5-phospho-alpha-D-ribose 1-diphosphate + anthranilate. It functions in the pathway amino-acid biosynthesis; L-tryptophan biosynthesis; L-tryptophan from chorismate: step 2/5. In terms of biological role, catalyzes the transfer of the phosphoribosyl group of 5-phosphorylribose-1-pyrophosphate (PRPP) to anthranilate to yield N-(5'-phosphoribosyl)-anthranilate (PRA). This chain is Anthranilate phosphoribosyltransferase, found in Bradyrhizobium diazoefficiens (strain JCM 10833 / BCRC 13528 / IAM 13628 / NBRC 14792 / USDA 110).